We begin with the raw amino-acid sequence, 175 residues long: MSIDDLKSKIPDFAKDVRLNLSSMASDETLTPQQKYGLFVACGIASRNADVRKALVAEAAGKVDASVIQAAKAAASIMGMNNVYYRFVHLASNKDYRTMPARLRMNVISNPGVDKVDFELWSLAVSAINGCGMCIDAHEDVLRKANVTAEAIQAAVRFASIIQSAAIALEAADTE.

Catalysis depends on Cys131, which acts as the Proton donor. A disulfide bridge links Cys131 with Cys134. Residue Cys134 is the Cysteine sulfenic acid (-SOH) intermediate of the active site.

The protein belongs to the AhpD family.

It carries out the reaction N(6)-[(R)-dihydrolipoyl]-L-lysyl-[lipoyl-carrier protein] + a hydroperoxide = N(6)-[(R)-lipoyl]-L-lysyl-[lipoyl-carrier protein] + an alcohol + H2O. Antioxidant protein with alkyl hydroperoxidase activity. Required for the reduction of the AhpC active site cysteine residues and for the regeneration of the AhpC enzyme activity. In Brucella melitensis biotype 1 (strain ATCC 23456 / CCUG 17765 / NCTC 10094 / 16M), this protein is Alkyl hydroperoxide reductase AhpD.